The chain runs to 181 residues: ATP-dependent protease subunit HslV (181 aa).

T9 is a catalytic residue. Residues S166, C169, and T172 each contribute to the Na(+) site.

This sequence belongs to the peptidase T1B family. HslV subfamily. As to quaternary structure, a double ring-shaped homohexamer of HslV is capped on each side by a ring-shaped HslU homohexamer. The assembly of the HslU/HslV complex is dependent on binding of ATP.

Its subcellular location is the cytoplasm. The catalysed reaction is ATP-dependent cleavage of peptide bonds with broad specificity.. Its activity is regulated as follows. Allosterically activated by HslU binding. Protease subunit of a proteasome-like degradation complex believed to be a general protein degrading machinery. This Staphylococcus haemolyticus (strain JCSC1435) protein is ATP-dependent protease subunit HslV.